Reading from the N-terminus, the 394-residue chain is 1-deoxy-D-xylulose 5-phosphate reductoisomerase (394 aa).

NADPH is bound by residues Thr10, Gly11, Ser12, Ile13, Gly38, Arg39, Asn40, and Asn123. Lys124 contributes to the 1-deoxy-D-xylulose 5-phosphate binding site. Residue Glu125 coordinates NADPH. Residue Asp149 coordinates Mn(2+). Residues Ser150, Glu151, Ser175, and His198 each coordinate 1-deoxy-D-xylulose 5-phosphate. Position 151 (Glu151) interacts with Mn(2+). Gly204 serves as a coordination point for NADPH. Residues Ser211, Asn216, Lys217, and Glu220 each coordinate 1-deoxy-D-xylulose 5-phosphate. Glu220 lines the Mn(2+) pocket.

Belongs to the DXR family. The cofactor is Mg(2+). It depends on Mn(2+) as a cofactor.

It catalyses the reaction 2-C-methyl-D-erythritol 4-phosphate + NADP(+) = 1-deoxy-D-xylulose 5-phosphate + NADPH + H(+). The protein operates within isoprenoid biosynthesis; isopentenyl diphosphate biosynthesis via DXP pathway; isopentenyl diphosphate from 1-deoxy-D-xylulose 5-phosphate: step 1/6. In terms of biological role, catalyzes the NADPH-dependent rearrangement and reduction of 1-deoxy-D-xylulose-5-phosphate (DXP) to 2-C-methyl-D-erythritol 4-phosphate (MEP). This Cereibacter sphaeroides (strain ATCC 17025 / ATH 2.4.3) (Rhodobacter sphaeroides) protein is 1-deoxy-D-xylulose 5-phosphate reductoisomerase.